Here is a 221-residue protein sequence, read N- to C-terminus: Veficolin-1 (221 aa).

The signal sequence occupies residues 1-25 (MTAWLDFPLALSPLVVVSMKGGSFG). One can recognise a Collagen-like domain in the interval 50-104 (QGQAGIPGIPGVPGTNGLPGAKGDLGPQGPPGERGSTGIPGKAGPKGDKGDQGEA). The disordered stretch occupies residues 54-104 (GIPGIPGVPGTNGLPGAKGDLGPQGPPGERGSTGIPGKAGPKGDKGDQGEA). The Fibrinogen C-terminal domain maps to 111-221 (QQQEAGAKDC…DFNNSKTFAK (111 aa)). Cysteines 120 and 148 form a disulfide.

The protein belongs to the ficolin lectin family. Veficolin subfamily. In terms of tissue distribution, expressed by the mandibular venom duct.

Its subcellular location is the secreted. Its function is as follows. Initiates complement activation and/or interferes in platelet aggregation and/or blood coagulation. The polypeptide is Veficolin-1 (Varanus komodoensis (Komodo dragon)).